Here is a 184-residue protein sequence, read N- to C-terminus: Large ribosomal subunit protein uL6 (184 aa).

This sequence belongs to the universal ribosomal protein uL6 family. As to quaternary structure, part of the 50S ribosomal subunit.

In terms of biological role, this protein binds to the 23S rRNA, and is important in its secondary structure. It is located near the subunit interface in the base of the L7/L12 stalk, and near the tRNA binding site of the peptidyltransferase center. This chain is Large ribosomal subunit protein uL6, found in Thermococcus kodakarensis (strain ATCC BAA-918 / JCM 12380 / KOD1) (Pyrococcus kodakaraensis (strain KOD1)).